The primary structure comprises 257 residues: Protein THYLAKOID ASSEMBLY 8-like, chloroplastic (257 aa).

A chloroplast-targeting transit peptide spans 1–55 (MTAIRVCSRKFPTFASIFFQNITRNPSIHRISFSNLKPKTLLHPIPPKPFTVFVS). PPR repeat units follow at residues 142-176 (DVFMYKDLIVSLAKSKRMDEAMALWEKMKKENLFP) and 177-211 (DSQTYTEVIRGFLRDGCPADAMNVYEDMLKSPDPP).

This sequence belongs to the PPR family. P subfamily.

The protein localises to the plastid. The protein resides in the chloroplast. Its function is as follows. Binds weakly to specific single strand RNA (ssRNA). The polypeptide is Protein THYLAKOID ASSEMBLY 8-like, chloroplastic (Arabidopsis thaliana (Mouse-ear cress)).